The chain runs to 79 residues: Sulfur carrier protein TusA (79 aa).

The active-site Cysteine persulfide intermediate is the C17.

This sequence belongs to the sulfur carrier protein TusA family.

Its subcellular location is the cytoplasm. In terms of biological role, sulfur carrier protein which probably makes part of a sulfur-relay system. This is Sulfur carrier protein TusA from Idiomarina loihiensis (strain ATCC BAA-735 / DSM 15497 / L2-TR).